Here is a 329-residue protein sequence, read N- to C-terminus: MMSNSSSEIDVIKTRIPTYDEDDNTILYAYETKPEFVNKEPNIVSDASCNTEEQLKTVDDVLIHCQVIYDALQNLDKKIDVIRRKVSKIQRFHARSLWTNHKRYGYKKHSYRLVKKLKLQKMKKNEVYETFSYPESYSPTLPVSRRENNSPSNLPRPSFCMEEYQRAELEEDPILSRTPSPVHPSDFSEHNCQPYYASDGATYGSSSGLCLGNPRADSIHNTYSTDHASAAPPSVTRSPVENDGYIEEGSITKHPSTWSVEAVVLFLKQTDPLALCPLVDLFRSHEIDGKALLLLTSDVLLKHLGVKLGTAVKLCYYIDRLKQGKCFEN.

Phosphoserine is present on residues S138 and S238. Residues 138-157 form a disordered region; sequence SPTLPVSRRENNSPSNLPRP. One can recognise an SAM domain in the interval 258-325; that stretch reads WSVEAVVLFL…YYIDRLKQGK (68 aa).

It belongs to the SCM family. In terms of tissue distribution, ubiquitous. Expressed in fetal and adult tissues.

It localises to the nucleus. Functionally, putative Polycomb group (PcG) protein. PcG proteins act by forming multiprotein complexes, which are required to maintain the transcriptionally repressive state of homeotic genes throughout development. May be involved in spermatogenesis during sexual maturation. The chain is Sex comb on midleg-like protein 1 (SCML1) from Homo sapiens (Human).